We begin with the raw amino-acid sequence, 334 residues long: Protein-methionine-sulfoxide reductase catalytic subunit MsrP (334 aa).

Residues 1 to 44 (MKKNQFLKESDVTAESVFFMKRRQVLKALGISAAALSLPHAAHA) constitute a signal peptide (tat-type signal). Mo-molybdopterin contacts are provided by residues N88, 91–92 (YE), C146, T181, N233, R238, and 249–251 (GIK).

Belongs to the MsrP family. In terms of assembly, heterodimer of a catalytic subunit (MsrP) and a heme-binding subunit (MsrQ). It depends on Mo-molybdopterin as a cofactor. In terms of processing, predicted to be exported by the Tat system. The position of the signal peptide cleavage has not been experimentally proven.

It localises to the periplasm. The enzyme catalyses L-methionyl-[protein] + a quinone + H2O = L-methionyl-(S)-S-oxide-[protein] + a quinol. It carries out the reaction L-methionyl-[protein] + a quinone + H2O = L-methionyl-(R)-S-oxide-[protein] + a quinol. Part of the MsrPQ system that repairs oxidized periplasmic proteins containing methionine sulfoxide residues (Met-O), using respiratory chain electrons. Thus protects these proteins from oxidative-stress damage caused by reactive species of oxygen and chlorine generated by the host defense mechanisms. MsrPQ is essential for the maintenance of envelope integrity under bleach stress, rescuing a wide series of structurally unrelated periplasmic proteins from methionine oxidation, including the primary periplasmic chaperone SurA and the lipoprotein Pal. The catalytic subunit MsrP is non-stereospecific, being able to reduce both (R-) and (S-) diastereoisomers of methionine sulfoxide. The polypeptide is Protein-methionine-sulfoxide reductase catalytic subunit MsrP (Shigella sonnei (strain Ss046)).